The primary structure comprises 140 residues: Hemoglobin subunit alpha (140 aa).

The 140-residue stretch at L1–R140 folds into the Globin domain. S2 is modified (phosphoserine). Residues K6 and K10 each carry the N6-succinyllysine modification. At K15 the chain carries N6-acetyllysine; alternate. N6-succinyllysine; alternate is present on K15. The residue at position 23 (Y23) is a Phosphotyrosine. S34 bears the Phosphoserine mark. The residue at position 39 (K39) is an N6-succinyllysine. At S48 the chain carries Phosphoserine. O2 is bound at residue H57. Residue H86 participates in heme b binding. Residue S101 is modified to Phosphoserine. Residue T107 is modified to Phosphothreonine. Phosphoserine is present on S123. A phosphothreonine mark is found at T133 and T136. Residue S137 is modified to Phosphoserine.

The protein belongs to the globin family. In terms of assembly, heterotetramer of two alpha chains and two beta chains. Red blood cells.

Functionally, involved in oxygen transport from the lung to the various peripheral tissues. In terms of biological role, hemopressin acts as an antagonist peptide of the cannabinoid receptor CNR1. Hemopressin-binding efficiently blocks cannabinoid receptor CNR1 and subsequent signaling. The polypeptide is Hemoglobin subunit alpha (HBA) (Tragelaphus strepsiceros (Greater kudu)).